Reading from the N-terminus, the 298-residue chain is ADP-ribosylation factor GTPase-activating protein effector protein 2 (298 aa).

Ser2 is modified (N-acetylserine). The Arf-GAP domain maps to 8–130; the sequence is KKALSALLRD…KWIGDLSSIE (123 aa). The segment at 23-47 adopts a C4-type zinc-finger fold; it reads CADCKAQLHPRWASWSLGVFICIKC. A disordered region spans residues 137-180; that stretch reads EPVLHKPSANHSLPASNARLDQSSNSLQKTQTQPPSHLLSTSRS. Positions 145-171 are enriched in polar residues; that stretch reads ANHSLPASNARLDQSSNSLQKTQTQPP. A phosphoserine mark is found at Ser180, Ser183, and Ser207.

The protein localises to the cytoplasm. The protein resides in the golgi apparatus. GTPase-activating protein for the ADP ribosylation factor family. This Saccharomyces cerevisiae (strain ATCC 204508 / S288c) (Baker's yeast) protein is ADP-ribosylation factor GTPase-activating protein effector protein 2 (AGE2).